A 244-amino-acid chain; its full sequence is Transcription factor A, mitochondrial (244 aa).

The N-terminal 42 residues, 1–42 (MALFRGMWGVLRTLGRTGVEMCAGCGGRIPSPVSLICIPKCF), are a transit peptide targeting the mitochondrion. Residues 49-117 (PKKPMSSYLR…VYKEAVSKYK (69 aa)) constitute a DNA-binding region (HMG box 1). Residues Ser54, Ser55, and Ser60 each carry the phosphoserine; by PKA modification. At Lys66 the chain carries N6-succinyllysine. Thr121 bears the Phosphothreonine mark. The segment at residues 154-218 (PKRPRSAYNI…RYDNEMKSWE (65 aa)) is a DNA-binding region (HMG box 2). Ser159 bears the Phosphoserine; by PKA mark. Ser192 carries the phosphoserine modification. The interval 221–244 (MAEVGRSDLIRRSVKRPPGDISEN) is disordered.

Monomer; binds DNA as a monomer. Homodimer. Component of the mitochondrial transcription initiation complex, composed at least of TFB2M, TFAM and POLRMT. In this complex TFAM recruits POLRMT to the promoter whereas TFB2M induces structural changes in POLRMT to enable promoter opening and trapping of the DNA non-template strand. Upon metabolic stress, forms a complex composed of FOXO3, SIRT3, TFAM and POLRMT. Interacts with TFB1M and TFB2M. Interacts with CLPX; this enhances DNA-binding. Phosphorylation by PKA within the HMG box 1 impairs DNA binding and promotes degradation by the AAA+ Lon protease. In terms of tissue distribution, the mitochondrial isoform is widely expressed while the nuclear isoform is testis-specific.

The protein resides in the mitochondrion. It is found in the mitochondrion matrix. Its subcellular location is the mitochondrion nucleoid. The protein localises to the nucleus. In terms of biological role, binds to the mitochondrial light strand promoter and functions in mitochondrial transcription regulation. Component of the mitochondrial transcription initiation complex, composed at least of TFB2M, TFAM and POLRMT that is required for basal transcription of mitochondrial DNA. In this complex, TFAM recruits POLRMT to a specific promoter whereas TFB2M induces structural changes in POLRMT to enable promoter opening and trapping of the DNA non-template strand. Required for accurate and efficient promoter recognition by the mitochondrial RNA polymerase. Promotes transcription initiation from the HSP1 and the light strand promoter by binding immediately upstream of transcriptional start sites. Is able to unwind DNA. Bends the mitochondrial light strand promoter DNA into a U-turn shape via its HMG boxes. Required for maintenance of normal levels of mitochondrial DNA. May play a role in organizing and compacting mitochondrial DNA. Functionally, may also function as a transcriptional activator or may have a structural role in the compaction of nuclear DNA during spermatogenesis. The sequence is that of Transcription factor A, mitochondrial from Rattus norvegicus (Rat).